Here is a 243-residue protein sequence, read N- to C-terminus: Zinc import ATP-binding protein ZnuC 2 (243 aa).

Positions 3–218 (LSLHQLSVKF…PEYKVLFGLD (216 aa)) constitute an ABC transporter domain. Residue 35-42 (GPNGSGKS) coordinates ATP.

The protein belongs to the ABC transporter superfamily. Zinc importer (TC 3.A.1.15.5) family. As to quaternary structure, the complex is composed of two ATP-binding proteins (ZnuC), two transmembrane proteins (ZnuB) and a solute-binding protein (ZnuA).

The protein localises to the cell inner membrane. The enzyme catalyses Zn(2+)(out) + ATP(in) + H2O(in) = Zn(2+)(in) + ADP(in) + phosphate(in) + H(+)(in). Part of the ABC transporter complex ZnuABC involved in zinc import. Responsible for energy coupling to the transport system. This Aliivibrio fischeri (strain ATCC 700601 / ES114) (Vibrio fischeri) protein is Zinc import ATP-binding protein ZnuC 2.